The chain runs to 421 residues: MFIDVAKIELKAGKGGDGSVAFRREKYEPSGGPAGGDGGDGGSIIIVGDKDIKTLMDYSYRSIYKAESGGDGRNKKQFGKKGEDLILKVPVGTLVKDYDTDTVIYDVKHDKEEFVICKGGKGGKGNVHFKSSIRQAPRFAEPGEKGEEKTIKLELKLLADVGLIGLPNVGKSTLLSIMSNARPKIANYHFTTLEPNLGVCKVGEKSFVLADIPGLIEGASEGLGLGHDFLKHIERTKILVHVLDISGSEGRNPIEDFELINSELSSYNIKLNDKKMLVVLNKTDLGAEDNIKEFREKYSDKVDEIVEISAATTENVDKLMYLIADTLDSIEDDYSTLDEQYVYFEEEKEPDFKVRRENENYIVEGPLIENLIYRTNFEVYESVNHLQKVLEDKGVIQQLKDLGIQDGDNVVIGDVEFDFYE.

An Obg domain is found at 1–158; that stretch reads MFIDVAKIEL…KTIKLELKLL (158 aa). A disordered region spans residues 21-40; the sequence is AFRREKYEPSGGPAGGDGGD. Residues 159-328 form the OBG-type G domain; that stretch reads ADVGLIGLPN…LMYLIADTLD (170 aa). GTP contacts are provided by residues 165-172, 190-194, 211-214, 281-284, and 309-311; these read GLPNVGKS, FTTLE, DIPG, NKTD, and SAA. Ser-172 and Thr-192 together coordinate Mg(2+). Residues 344-421 form the OCT domain; the sequence is FEEEKEPDFK…IGDVEFDFYE (78 aa).

This sequence belongs to the TRAFAC class OBG-HflX-like GTPase superfamily. OBG GTPase family. Monomer. Requires Mg(2+) as cofactor.

It localises to the cytoplasm. Functionally, an essential GTPase which binds GTP, GDP and possibly (p)ppGpp with moderate affinity, with high nucleotide exchange rates and a fairly low GTP hydrolysis rate. Plays a role in control of the cell cycle, stress response, ribosome biogenesis and in those bacteria that undergo differentiation, in morphogenesis control. This Finegoldia magna (strain ATCC 29328 / DSM 20472 / WAL 2508) (Peptostreptococcus magnus) protein is GTPase Obg.